The following is a 141-amino-acid chain: Acetyltransferase YPN_1354 (141 aa).

One can recognise an N-acetyltransferase domain in the interval 1–141; the sequence is MEIRIFQQDD…GKRLIVDQEY (141 aa).

This sequence belongs to the acetyltransferase family. YpeA subfamily.

The protein is Acetyltransferase YPN_1354 of Yersinia pestis bv. Antiqua (strain Nepal516).